The following is a 643-amino-acid chain: MSFSVTLPDGSKKDFDKAVSVKELASSIATSLGKAAVGAKINGEMKPLDYVVDEDVEAAIITDKDEEGLNILRATAAFLLEAIAKRKYPELRLGMHEADEGGFFVDTDKEDQIKITELPELEKEMQKAIKNGEKIEYTSMKKSELEDIFKDDQFKLDLLKDEKDEVAVYKLGDFVDFGFEALLPNTGKIKNFKLLSVAGAYWLGKSSNPMLQRIFGTAFFKKAALDEDLKRRAEIKERDHRTIGRDLDLFFVDPKVGAGLPYWMPKGATIRRVVERYIVDKEVADGYEHVYTPVLMNVDAYKTSGHWAHYRDDMFPPMDMGDGEMLELRPMNCPSHIQIYKHHIRSYRELPIRIAELGMMHRYEKSGALSGLQRVREMTLNDGHTFVALDQIREEFAKVLKLIMDVYKDFDITDYYFRLSYRDPKNTDKYYANDEMWEKSQSMLKAAMDDLGLDYVEAEGEAAFYGPKLDIQTKTALGNDETMSTIQLDFMLPERFGLTYVGQDGEEHRPVMIHRGIVGTMERFIAYLTEIYKGAFPTWLAPVQAEIIPVNEEAHGAYADKVREELAKRGFRAEVDHRNEKLGYKIRESQTQKVPYTLVLGDDEMNANGVNVRRYGTEEQISKSLDDFIAEIDADVKSYSREK.

The region spanning methionine 1–threonine 62 is the TGS domain. The interval aspartate 239 to proline 537 is catalytic. Cysteine 333, histidine 384, and histidine 514 together coordinate Zn(2+).

This sequence belongs to the class-II aminoacyl-tRNA synthetase family. In terms of assembly, homodimer. Zn(2+) serves as cofactor.

It localises to the cytoplasm. It carries out the reaction tRNA(Thr) + L-threonine + ATP = L-threonyl-tRNA(Thr) + AMP + diphosphate + H(+). Catalyzes the attachment of threonine to tRNA(Thr) in a two-step reaction: L-threonine is first activated by ATP to form Thr-AMP and then transferred to the acceptor end of tRNA(Thr). Also edits incorrectly charged L-seryl-tRNA(Thr). The sequence is that of Threonine--tRNA ligase from Lactobacillus gasseri (strain ATCC 33323 / DSM 20243 / BCRC 14619 / CIP 102991 / JCM 1131 / KCTC 3163 / NCIMB 11718 / NCTC 13722 / AM63).